The primary structure comprises 511 residues: Coatomer subunit delta (511 aa).

The span at Q168 to G177 shows a compositional bias: basic and acidic residues. The segment at Q168–S188 is disordered. S223 is modified (phosphoserine). An N6-acetyllysine mark is found at K233 and K241. Phosphoserine is present on S244. Residues M271–L511 enclose the MHD domain. K309 and K351 each carry N6-acetyllysine. S493 carries the phosphoserine modification.

It belongs to the adaptor complexes medium subunit family. Delta-COP subfamily. Oligomeric complex that consists of at least the alpha, beta, beta', gamma, delta, epsilon and zeta subunits.

Its subcellular location is the cytoplasm. It localises to the golgi apparatus membrane. The protein localises to the cytoplasmic vesicle. The protein resides in the COPI-coated vesicle membrane. In terms of biological role, the coatomer is a cytosolic protein complex that binds to dilysine motifs and reversibly associates with Golgi non-clathrin-coated vesicles, which further mediate biosynthetic protein transport from the ER, via the Golgi up to the trans Golgi network. Coatomer complex is required for budding from Golgi membranes, and is essential for the retrograde Golgi-to-ER transport of dilysine-tagged proteins. In mammals, the coatomer can only be recruited by membranes associated to ADP-ribosylation factors (ARFs), which are small GTP-binding proteins; the complex also influences the Golgi structural integrity, as well as the processing, activity, and endocytic recycling of LDL receptors. This chain is Coatomer subunit delta (Arcn1), found in Mus musculus (Mouse).